Reading from the N-terminus, the 334-residue chain is Ferric enterobactin transport system permease protein FepD (334 aa).

Residues 1-9 lie on the Periplasmic side of the membrane; the sequence is MSGSVAVTR. Residues 10–30 traverse the membrane as a helical segment; that stretch reads AIAVPGLLLLLIIATALSLLI. Residues 31–63 are Cytoplasmic-facing; the sequence is GAKSLPASVVLEAFSGTCQSADCTIVLDARLPR. Residues 64-84 form a helical membrane-spanning segment; the sequence is TLAGLLAGGALGLAGALMQTL. Topologically, residues 85–92 are periplasmic; that stretch reads TRNPLADP. A helical membrane pass occupies residues 93 to 113; sequence GLLGVNAGASFAIVLGAALFG. Residues 114–120 lie on the Cytoplasmic side of the membrane; sequence YSSAQEQ. Residues 121–141 form a helical membrane-spanning segment; it reads LAMAFAGALVASLIVAFTGSQ. Residues 142-151 lie on the Periplasmic side of the membrane; the sequence is GGGQLSPVRL. Residues 152–172 form a helical membrane-spanning segment; it reads TLAGVALAAVLEGLTSGIALL. At 173-192 the chain is on the cytoplasmic side; sequence NPDVYDQLRFWQAGSLDIRN. A helical membrane pass occupies residues 193–213; that stretch reads LHTLKVVLIPVLIAGATALLL. Residues 214 to 241 lie on the Periplasmic side of the membrane; the sequence is SRALNSLSLGSDTATALGSRVARTQLIG. The helical transmembrane segment at 242-262 threads the bilayer; the sequence is LLAITVLCGSATAIVGPIAFI. Over 263–279 the chain is Cytoplasmic; sequence GLMMPHMARWLVGADHR. Residues 280 to 300 form a helical membrane-spanning segment; it reads WSLPVTLLATPALLLFADIIG. Over 301-305 the chain is Periplasmic; it reads RVIVP. A helical transmembrane segment spans residues 306–326; the sequence is GELRVSVVSAFIGAPVLIFLV. Over 327 to 334 the chain is Cytoplasmic; the sequence is RRKTRGGA.

This sequence belongs to the binding-protein-dependent transport system permease family. FecCD subfamily. As to quaternary structure, the complex is composed of two ATP-binding proteins (FepC), two transmembrane proteins (FepD and FepG) and a solute-binding protein (FepB).

It is found in the cell inner membrane. Part of the ABC transporter complex FepBDGC involved in ferric enterobactin uptake. Responsible for the translocation of the substrate across the membrane. This chain is Ferric enterobactin transport system permease protein FepD (fepD), found in Escherichia coli (strain K12).